The primary structure comprises 573 residues: MRTENTATLNLMWGALILEELARLGVQHVCMAPGSRSTPLTLAAAQQTKLKRHLHFDERGLGFMALGLAKASCAPVAIITTSGTAVANLYPAIVEAWLTHVPLIVLSGDRPPELLGCGANQAIVQPAIFANYAQQVNLPTPDAHIAPQMLLTTLDEAVANQTRPVHINCMYREPLYPSEMSGTILDSESPYLRPLQTWLQHARPYTQYGKSEQLSSPSDDAIMRFVHGKGVIIAGTLTPEQDPQQLIALSQKIGWPLLTDAQSQLRQHPAAIGNIDQLLQHPKARNLLQEADRVLVFGGRLLSKRLIAYLAEQNWHSYWQVLPQQDRLDPSHNAKHIWHANAAQFAQLNWYRSSSANWANTLVTYNDELHSLFVRNIDQGEFGEAQVIRAIANTRPLEQQLFIGNSLPVRLYDMYAPVSCCTATTYTNRGASGIDGLLATACGIAAHQGKPTSLIIGDLSQLHDLNSFAIARSLTSPLVIIILNNDGGNIFNLLPVPNEELRSDYYRLSHGLEFGYAAAMFNLPYNQVDNLADFQSCYHEALDYQGASVIEVSVSQHQASEQIAALNLWVKQS.

This sequence belongs to the TPP enzyme family. MenD subfamily. As to quaternary structure, homodimer. The cofactor is Mg(2+). Requires Mn(2+) as cofactor. It depends on thiamine diphosphate as a cofactor.

The catalysed reaction is isochorismate + 2-oxoglutarate + H(+) = 5-enolpyruvoyl-6-hydroxy-2-succinyl-cyclohex-3-ene-1-carboxylate + CO2. Its pathway is quinol/quinone metabolism; 1,4-dihydroxy-2-naphthoate biosynthesis; 1,4-dihydroxy-2-naphthoate from chorismate: step 2/7. It participates in quinol/quinone metabolism; menaquinone biosynthesis. In terms of biological role, catalyzes the thiamine diphosphate-dependent decarboxylation of 2-oxoglutarate and the subsequent addition of the resulting succinic semialdehyde-thiamine pyrophosphate anion to isochorismate to yield 2-succinyl-5-enolpyruvyl-6-hydroxy-3-cyclohexene-1-carboxylate (SEPHCHC). In Shewanella sp. (strain MR-4), this protein is 2-succinyl-5-enolpyruvyl-6-hydroxy-3-cyclohexene-1-carboxylate synthase.